The primary structure comprises 315 residues: Gamma-hemolysin component C (315 aa).

Positions 1-29 (MLKNKILATTLSVSLLAPLANPLLENAKA) are cleaved as a signal peptide.

Belongs to the aerolysin family. As to quaternary structure, toxicity requires sequential binding and synergistic association of a class S and a class F component which form heterooligomeric complexes. HlgC (class S) associates with HlgB (class F) thus forming an CB toxin.

Its function is as follows. Toxin that seems to act by forming pores in the membrane of the cell. Has a hemolytic and a leucotoxic activity. This is Gamma-hemolysin component C (hlgC) from Staphylococcus aureus (strain MRSA252).